The primary structure comprises 312 residues: DNA-directed RNA polymerase subunit alpha (312 aa).

Residues 1–226 are alpha N-terminal domain (alpha-NTD); sequence MIEFEKPIIT…EHLNLFTDLT (226 aa). The tract at residues 243–312 is alpha C-terminal domain (alpha-CTD); sequence DEKVLDRTIE…DLGLGLKNDK (70 aa).

The protein belongs to the RNA polymerase alpha chain family. In terms of assembly, homodimer. The RNAP catalytic core consists of 2 alpha, 1 beta, 1 beta' and 1 omega subunit. When a sigma factor is associated with the core the holoenzyme is formed, which can initiate transcription.

The enzyme catalyses RNA(n) + a ribonucleoside 5'-triphosphate = RNA(n+1) + diphosphate. Functionally, DNA-dependent RNA polymerase catalyzes the transcription of DNA into RNA using the four ribonucleoside triphosphates as substrates. This is DNA-directed RNA polymerase subunit alpha from Streptococcus pyogenes serotype M1.